A 188-amino-acid chain; its full sequence is Transmembrane protein 160 (188 aa).

The N-terminal 96 residues, 1–96 (MGGGWWWARV…ISFMQSDMGR (96 aa)), are a transit peptide targeting the mitochondrion. The tract at residues 21-53 (SLQPPQRPRSGGARGSFAPGHGPRAGASPPPVS) is disordered. Residue Ser48 is modified to Phosphoserine. Helical transmembrane passes span 102–122 (FFLLGGLCVVWGGASYAVGLA) and 135–155 (AAAGVGAVLAASLLWACAVGL). The disordered stretch occupies residues 168–188 (PEDDGAASTEGPDEAGRPPPE).

The protein belongs to the TMEM160 family. As to expression, expressed in peripheral sensory neurons of dorsal root ganglia (DRG).

It is found in the mitochondrion inner membrane. In Mus musculus (Mouse), this protein is Transmembrane protein 160.